Here is a 255-residue protein sequence, read N- to C-terminus: NAD kinase (255 aa).

Asp-44 functions as the Proton acceptor in the catalytic mechanism. Residues 44–45 (DG), His-49, 114–115 (NE), Asp-144, Ala-152, 155–160 (SAYNLS), and Gln-216 each bind NAD(+).

It belongs to the NAD kinase family. Requires a divalent metal cation as cofactor.

Its subcellular location is the cytoplasm. The enzyme catalyses NAD(+) + ATP = ADP + NADP(+) + H(+). Functionally, involved in the regulation of the intracellular balance of NAD and NADP, and is a key enzyme in the biosynthesis of NADP. Catalyzes specifically the phosphorylation on 2'-hydroxyl of the adenosine moiety of NAD to yield NADP. This chain is NAD kinase, found in Rickettsia conorii (strain ATCC VR-613 / Malish 7).